The chain runs to 213 residues: Orotate phosphoribosyltransferase (213 aa).

K26 provides a ligand contact to 5-phospho-alpha-D-ribose 1-diphosphate. F34–F35 contributes to the orotate binding site. Residues Y72–K73, R99, K100, K103, H105, and D124–A132 each bind 5-phospho-alpha-D-ribose 1-diphosphate. T128 and R156 together coordinate orotate.

This sequence belongs to the purine/pyrimidine phosphoribosyltransferase family. PyrE subfamily. Homodimer. Mg(2+) serves as cofactor.

The enzyme catalyses orotidine 5'-phosphate + diphosphate = orotate + 5-phospho-alpha-D-ribose 1-diphosphate. It participates in pyrimidine metabolism; UMP biosynthesis via de novo pathway; UMP from orotate: step 1/2. Functionally, catalyzes the transfer of a ribosyl phosphate group from 5-phosphoribose 1-diphosphate to orotate, leading to the formation of orotidine monophosphate (OMP). The protein is Orotate phosphoribosyltransferase of Pseudomonas putida (strain GB-1).